Here is a 707-residue protein sequence, read N- to C-terminus: Protein MICRORCHIDIA 7 (707 aa).

Composition is skewed to basic and acidic residues over residues 1 to 11 and 575 to 587; these read MDNSIHVKREI and DNRDSSPENDREG. Disordered regions lie at residues 1 to 22 and 568 to 619; these read MDNSIHVKREIQLPSTSPAGFP and EKSA…SGKD. Over residues 590–613 the composition is skewed to polar residues; it reads SIKTPTPASDKFYSSSYPNHNGDN. A coiled-coil region spans residues 620-701; that stretch reads GARLQEELRR…NKIKKMEGSK (82 aa). The Nuclear localization signal signature appears at 633-640; it reads RRKALEVE.

It belongs to the MORC ATPase protein family. As to quaternary structure, homodimer and heterodimer. Component of an RNA-directed DNA methylation (RdDM) complex. Forms homomeric complexes. It depends on Mg(2+) as a cofactor. Mn(2+) serves as cofactor.

It localises to the nucleus. Functionally, exhibits ATPase activity. Binds DNA/RNA in a non-specific manner and exhibits endonuclease activity. Probably involved in DNA repair. Involved in RNA-directed DNA methylation (RdDM) as a component of the RdDM machinery and required for gene silencing. May also be involved in the regulation of chromatin architecture to maintain gene silencing. Together with MORC4, acts to suppress a wide set of non-methylated protein-coding genes, especially involved in pathogen response. Positive regulators of defense against the oomycete Hyaloperonospora arabidopsidis (Hpa). In Arabidopsis thaliana (Mouse-ear cress), this protein is Protein MICRORCHIDIA 7.